Reading from the N-terminus, the 1016-residue chain is Enhancer of polycomb-like protein 1 (1016 aa).

Disordered regions lie at residues 1 to 50, 96 to 119, 450 to 488, 499 to 518, and 842 to 1016; these read MAIH…NDLE, LLGS…DASV, KEED…TIGT, GQVH…VKLP, and ARMR…PNRK. Positions 35 to 50 are enriched in polar residues; sequence YKQSDLPTLNASNDLE. Composition is skewed to basic and acidic residues over residues 103 to 116 and 457 to 473; these read DGDK…KKTD and ESSK…DSSR. Residues 475–488 are compositionally biased toward polar residues; that stretch reads GSATSMPGSATIGT. Positions 842-883 are enriched in low complexity; sequence ARMRTLQQQQRNNKQQAAGQSSGSSSASLGSNTNSNSSISGQ. Polar residues predominate over residues 884 to 902; that stretch reads ADQGQTNLTNSGITRQGGA. Residues 904–923 show a composition bias toward low complexity; the sequence is VNGSQTSTTNNTRSSVSGGS. Over residues 928–956 the composition is skewed to polar residues; the sequence is LPTQSSQRSNTNSPLLASQPQGYSQQQKF. The span at 960 to 971 shows a compositional bias: low complexity; it reads PPTSQSQSQSPT. Residues 976 to 994 show a composition bias toward polar residues; sequence QLQTSKMYNKHGSNITPSN.

The protein belongs to the enhancer of polycomb family. In terms of assembly, component of the NuA4 histone acetyltransferase complex.

It is found in the nucleus. Its function is as follows. Component of the NuA4 histone acetyltransferase complex which is involved in transcriptional activation of selected genes principally by acetylation of nucleosomal histone H4 and H2A. The NuA4 complex is also involved in DNA repair. Involved in gene silencing by neighboring heterochromatin, blockage of the silencing spreading along the chromosome, and required for cell cycle progression through G2/M. The chain is Enhancer of polycomb-like protein 1 (EPL1) from Debaryomyces hansenii (strain ATCC 36239 / CBS 767 / BCRC 21394 / JCM 1990 / NBRC 0083 / IGC 2968) (Yeast).